A 94-amino-acid chain; its full sequence is Cell division topological specificity factor (94 aa).

Belongs to the MinE family.

Functionally, prevents the cell division inhibition by proteins MinC and MinD at internal division sites while permitting inhibition at polar sites. This ensures cell division at the proper site by restricting the formation of a division septum at the midpoint of the long axis of the cell. This Hamiltonella defensa subsp. Acyrthosiphon pisum (strain 5AT) protein is Cell division topological specificity factor.